Reading from the N-terminus, the 430-residue chain is Alpha-humulene synthase asR6 (430 aa).

It belongs to the terpene synthase family. Alpha-humulene synthase eupE subfamily. Mg(2+) serves as cofactor.

It catalyses the reaction (2E,6E)-farnesyl diphosphate = alpha-humulene + diphosphate. It functions in the pathway secondary metabolite biosynthesis; terpenoid biosynthesis. Its function is as follows. Alpha-humulene synthase; part of the gene cluster that mediates the biosynthesis of xenovulene A, an unusual meroterpenoid that has potent inhibitory effects on the human gamma-aminobutyrate A (GABAA) benzodiazepine receptor. The first step of xenovulene A biosynthesis is the biosynthesis of 3-methylorcinaldehyde performed by the non-reducing polyketide synthase aspks1. The salicylate hydroxylase asL1 then catalyzes the oxidative dearomatization of 3-methylorcinaldehyde to yield a dearomatized hydroxycyclohexadione. The 2-oxoglutarate-dependent dioxygenase asL3 further catalyzes the oxidative ring expansion to provide the first tropolone metabolite. The cytochrome P450 monooxygenase asR2 allows the synthesis of tropolone hemiacetal. In parallel, a previously unrecognised class of terpene cyclase, asR6, produces alpha-humulene from farnesylpyrophosphate (FPP). The putative Diels-Alderase asR5 probably catalyzes the formation of the tropolone-humulene skeleton by linking humulene and the polyketide moiety. Oxidative-ring contractions catalyzed by asL4 and asL6 then processively remove carbon atoms from the polyketide to yield xenovulene A. This is Alpha-humulene synthase asR6 from Sarocladium schorii (Acremonium strictum (strain IMI 501407)).